The following is a 229-amino-acid chain: Adenylate kinase 1 (229 aa).

Position 42–47 (42–47) interacts with ATP; sequence GCGKGT. A Phosphoserine modification is found at Ser-62. Residues Ser-63, Arg-68, 118–121, and Gln-125 each bind AMP; that span reads GYPR. Arg-156 contacts ATP. Arg-164 and Arg-175 together coordinate AMP.

The protein belongs to the adenylate kinase family. AK1 subfamily. High expression levels in the thorax, suggesting a possible function in the gastrointestinal or reproductive systems.

It localises to the cytoplasm. It carries out the reaction AMP + ATP = 2 ADP. Its function is as follows. Catalyzes the reversible transfer of the terminal phosphate group between ATP and AMP. Plays an important role in cellular energy homeostasis and in adenine nucleotide metabolism. The sequence is that of Adenylate kinase 1 from Drosophila melanogaster (Fruit fly).